The following is a 928-amino-acid chain: Isoleucine--tRNA ligase (928 aa).

Positions 57 to 67 match the 'HIGH' region motif; that stretch reads PFANGNIHMGH. Glu552 provides a ligand contact to L-isoleucyl-5'-AMP. Positions 593 to 597 match the 'KMSKS' region motif; sequence KMSKS. Residue Lys596 coordinates ATP. Zn(2+) contacts are provided by Cys887, Cys890, Cys907, and Cys910.

The protein belongs to the class-I aminoacyl-tRNA synthetase family. IleS type 1 subfamily. Monomer. Zn(2+) is required as a cofactor.

The protein localises to the cytoplasm. It carries out the reaction tRNA(Ile) + L-isoleucine + ATP = L-isoleucyl-tRNA(Ile) + AMP + diphosphate. In terms of biological role, catalyzes the attachment of isoleucine to tRNA(Ile). As IleRS can inadvertently accommodate and process structurally similar amino acids such as valine, to avoid such errors it has two additional distinct tRNA(Ile)-dependent editing activities. One activity is designated as 'pretransfer' editing and involves the hydrolysis of activated Val-AMP. The other activity is designated 'posttransfer' editing and involves deacylation of mischarged Val-tRNA(Ile). This chain is Isoleucine--tRNA ligase, found in Lacticaseibacillus casei (strain BL23) (Lactobacillus casei).